Here is a 230-residue protein sequence, read N- to C-terminus: MTAIAPVITVDGPSGAGKGTLCKALAESLNWRLLDSGAIYRVLALAALHHQVDISTEEALVPLAAHLDVRFVSQNGQLQVILEGEDVSNEIRTETVGNTASQAAAFPRVREALLRRQRAFREAPGLIADGRDMGTIVFPDAPVKIFLDASSQERAHRRMLQLQERGFNVNFERLLAEIQERDNRDRNRSVAPLVPAADALVLDSTSMSIEQVIEQALAYAQRILALPLKK.

12–20 (GPSGAGKGT) is a binding site for ATP.

The protein belongs to the cytidylate kinase family. Type 1 subfamily.

Its subcellular location is the cytoplasm. It catalyses the reaction CMP + ATP = CDP + ADP. The catalysed reaction is dCMP + ATP = dCDP + ADP. The sequence is that of Cytidylate kinase from Yersinia pseudotuberculosis serotype O:1b (strain IP 31758).